The primary structure comprises 467 residues: Glutamine synthetase (467 aa).

Residues 11–95 (HDVKWIDLRF…IVCDIIEPST (85 aa)) form the GS beta-grasp domain. One can recognise a GS catalytic domain in the interval 103 to 467 (PRAIARRAEE…PLEYDLYYSV (365 aa)). Mg(2+)-binding residues include E128 and E130. Position 206 (E206) interacts with ATP. 2 residues coordinate Mg(2+): E211 and E219. Residues 263 to 264 (NG) and G264 contribute to the L-glutamate site. H268 is a binding site for Mg(2+). Residues 270–272 (HMS) and S272 each bind ATP. R320, E326, and R338 together coordinate L-glutamate. Positions 338, 343, and 351 each coordinate ATP. Residue E356 participates in Mg(2+) binding. R358 is a binding site for L-glutamate. Residue Y396 is modified to O-AMP-tyrosine.

The protein belongs to the glutamine synthetase family. In terms of assembly, oligomer of 12 subunits arranged in the form of two hexameric ring. Mg(2+) is required as a cofactor.

The protein localises to the cytoplasm. The enzyme catalyses L-glutamate + NH4(+) + ATP = L-glutamine + ADP + phosphate + H(+). The activity of this enzyme could be controlled by adenylation under conditions of abundant glutamine. Catalyzes the ATP-dependent biosynthesis of glutamine from glutamate and ammonia. In Azotobacter vinelandii, this protein is Glutamine synthetase.